The sequence spans 611 residues: MIEVLLVTICFTVFPYQGSSIILESGNVNDYEVVYPQKVPALPKGGVQNPQPETKYEDTMQYEFHVNGEPVVLHLERNKGLFSEDYTETHYAPDGREITTSPPVQDHCYYHGYIQNEADSSAAISACDGLKGHFKHRGETYFIEPLKLSNSESHAIYKDEHVEKEDEIPKICGVTQTTSESDEPIEKISQLTNTPEQDRYLQVKKYIELYVVVDNRMYRNYNSNRDAINERVYEMVNTLNVMYRPLNFFIALIGLEIWSNQDEINIEPEVAVTLRSFGEWRNTTLLPRKRNDNAQLLTGIDFNGATVGLAYVGTLCRPTQSVAVIQDHSKRTSMVASTMAHELGHNLGINHDSASCNCNAGPCIMSATISNQPLSEFSSCSVQEHQRYLLRVRPQCILNKPLSTDIVTPPVCGNYFVERGEECDCGSPQDCQDACCNAATCKLQHDCDSGECCEQCKFKKAGAECRAAKDDCDLPESCTGQSAECPTDSFQRNGHPCQNNQGYCYNGKCPIMTNQCIALKGPGVNVSPDECFTLKQNDPECGFCRIENGTKIPCAEKDKMCGKLLCQEGNATCICFPTTDDPDYGMVEPGTKCGDGKVCINRQCVDVQTAY.

Positions 1 to 20 are cleaved as a signal peptide; that stretch reads MIEVLLVTICFTVFPYQGSS. Residues 21–191 constitute a propeptide that is removed on maturation; the sequence is IILESGNVND…DEPIEKISQL (171 aa). The region spanning 205–401 is the Peptidase M12B domain; that stretch reads KYIELYVVVD…VRPQCILNKP (197 aa). Ca(2+) is bound at residue glutamate 208. N-linked (GlcNAc...) asparagine glycosylation occurs at asparagine 282. Aspartate 292 serves as a coordination point for Ca(2+). Cystine bridges form between cysteine 316–cysteine 396, cysteine 356–cysteine 380, and cysteine 358–cysteine 363. Histidine 341, histidine 345, and histidine 351 together coordinate Zn(2+). Cysteine 396, asparagine 399, asparagine 414, phenylalanine 416, glutamate 418, glutamate 421, and aspartate 424 together coordinate Ca(2+). In terms of domain architecture, Disintegrin spans 409–493; sequence PPVCGNYFVE…ECPTDSFQRN (85 aa). Disulfide bonds link cysteine 412–cysteine 441, cysteine 423–cysteine 436, cysteine 425–cysteine 431, cysteine 435–cysteine 456, cysteine 447–cysteine 453, cysteine 452–cysteine 478, cysteine 465–cysteine 485, cysteine 472–cysteine 504, cysteine 497–cysteine 509, cysteine 516–cysteine 566, cysteine 531–cysteine 573, cysteine 541–cysteine 575, cysteine 544–cysteine 554, cysteine 561–cysteine 599, and cysteine 593–cysteine 604. Residues 471-473 carry the D/ECD-tripeptide motif; the sequence is DCD. The Ca(2+) site is built by aspartate 473, leucine 474, glutamate 476, and aspartate 488. Asparagine 548 and asparagine 570 each carry an N-linked (GlcNAc...) asparagine glycan.

Belongs to the venom metalloproteinase (M12B) family. P-III subfamily. In terms of assembly, monomer. It depends on Zn(2+) as a cofactor. As to expression, expressed by the venom gland.

Its subcellular location is the secreted. Snake venom zinc metalloproteinase that may impair hemostasis in the prey. The sequence is that of Zinc metalloproteinase-disintegrin-like MTP9 from Drysdalia coronoides (White-lipped snake).